Consider the following 550-residue polypeptide: Methionine--tRNA ligase (550 aa).

A 'HIGH' region motif is present at residues 13-23; the sequence is PYANGPLHFGH. The Zn(2+) site is built by C145, C148, C158, and C161. Residues 331 to 335 carry the 'KMSKS' region motif; that stretch reads QFSKS. K334 lines the ATP pocket.

Belongs to the class-I aminoacyl-tRNA synthetase family. MetG type 1 subfamily. In terms of assembly, monomer. It depends on Zn(2+) as a cofactor.

The protein resides in the cytoplasm. It catalyses the reaction tRNA(Met) + L-methionine + ATP = L-methionyl-tRNA(Met) + AMP + diphosphate. Its function is as follows. Is required not only for elongation of protein synthesis but also for the initiation of all mRNA translation through initiator tRNA(fMet) aminoacylation. This is Methionine--tRNA ligase (metG) from Chlamydia trachomatis serovar D (strain ATCC VR-885 / DSM 19411 / UW-3/Cx).